We begin with the raw amino-acid sequence, 344 residues long: MDFSSCNNHYFYDVDMKEDFYRCIAPSEDIWKKFELVPGFPLSSGGCPGGGGTDWAAEMMDLGWESPVKLTGLSSVVLLRDCMWSGFSTRERLEKVIHERLSTGSPRVTNTQKPVADNETSEPGVDSIEQNATPLVVPTPIPEKVPNSSGSESTSDSEEDEIDVVTVEKRKSYGGRQPVTITVRADPTATKLFHISIHQQQHNYAARLPPEPNTMSPQHNFHSTVKEEPGEVTSPPELQPCSPQMPDSPLASGSSDSEDLAKRKNHNYLERKRRNDLRSRFLALREEVPSLSRSTKTPKVVVLSKATEFLKGLVIQEQQLTAEKLKLWSRHQQLLRRISQLKGR.

Composition is skewed to polar residues over residues 104–113 (GSPRVTNTQK) and 213–223 (NTMSPQHNFHS). Disordered stretches follow at residues 104 to 162 (GSPR…EDEI) and 208 to 271 (LPPE…YLER). Positions 259 to 270 (DLAKRKNHNYLE) are enriched in basic and acidic residues. The region spanning 261–313 (AKRKNHNYLERKRRNDLRSRFLALREEVPSLSRSTKTPKVVVLSKATEFLKGL) is the bHLH domain. Residues 313–341 (LVIQEQQLTAEKLKLWSRHQQLLRRISQL) form a leucine-zipper region.

In terms of assembly, efficient DNA binding requires dimerization with another bHLH protein. Binds DNA as a heterodimer with MAX. High levels in oocytes, modest levels in kidney and low levels in spleen.

The protein localises to the nucleus. In Xenopus laevis (African clawed frog), this protein is Protein L-Myc-1-B (mycl1-b).